We begin with the raw amino-acid sequence, 686 residues long: Acyl-CoA synthetase short-chain family member 3, mitochondrial (686 aa).

The N-terminal 29 residues, 1–29 (MKPSWLQCRKVTSAGGLGGPLPGSSPARG), are a transit peptide targeting the mitochondrion. A CoA-binding site is contributed by 227–230 (EPGR). ATP contacts are provided by residues 425–427 (GER) and 446–451 (DHWWQT). Lys-518 carries the N6-succinyllysine modification. Position 524 is an N6-acetyllysine (Lys-524). The ATP site is built by Asp-539, Arg-554, and Arg-565. CoA is bound at residue Arg-624.

The protein belongs to the ATP-dependent AMP-binding enzyme family.

Its subcellular location is the mitochondrion matrix. The enzyme catalyses acetate + ATP + CoA = acetyl-CoA + AMP + diphosphate. It carries out the reaction propanoate + ATP + CoA = propanoyl-CoA + AMP + diphosphate. The catalysed reaction is butanoate + ATP + CoA = butanoyl-CoA + AMP + diphosphate. Functionally, catalyzes the synthesis of acetyl-CoA from short-chain fatty acids. Propionate is the preferred substrate. Can utilize acetate and butyrate with a much lower affinity. This is Acyl-CoA synthetase short-chain family member 3, mitochondrial (ACSS3) from Homo sapiens (Human).